The primary structure comprises 457 residues: Serine--tRNA ligase (457 aa).

252-254 (TAE) contacts L-serine. ATP contacts are provided by residues 283-285 (RKE) and Val299. Glu306 serves as a coordination point for L-serine. 370–373 (EMVS) provides a ligand contact to ATP. Thr406 contributes to the L-serine binding site.

The protein belongs to the class-II aminoacyl-tRNA synthetase family. Type-1 seryl-tRNA synthetase subfamily. As to quaternary structure, homodimer. The tRNA molecule binds across the dimer.

It is found in the cytoplasm. It carries out the reaction tRNA(Ser) + L-serine + ATP = L-seryl-tRNA(Ser) + AMP + diphosphate + H(+). The enzyme catalyses tRNA(Sec) + L-serine + ATP = L-seryl-tRNA(Sec) + AMP + diphosphate + H(+). The protein operates within aminoacyl-tRNA biosynthesis; selenocysteinyl-tRNA(Sec) biosynthesis; L-seryl-tRNA(Sec) from L-serine and tRNA(Sec): step 1/1. In terms of biological role, catalyzes the attachment of serine to tRNA(Ser). Is also able to aminoacylate tRNA(Sec) with serine, to form the misacylated tRNA L-seryl-tRNA(Sec), which will be further converted into selenocysteinyl-tRNA(Sec). In Saccharolobus islandicus (strain M.14.25 / Kamchatka #1) (Sulfolobus islandicus), this protein is Serine--tRNA ligase.